The chain runs to 397 residues: MNYMMTDNEVFKEGLAGVPAAKSRVSHVDGTDGILEYRGIRIEELAKSSSFIEVAYLLIWGKLPTQAEIEEFEYEIRTHRRIKYHIRDMMKCFPETGHPMDALQTSAAALGLFYARRALDDPKYIRAAVVRLLAKIPTMVAAFHMIREGNDPIQPNDKLDYASNFLYMLTEKEPDPFAAKVFDVCLTLHAEHTMNASTFSARVTASTLTDPYAVVASAVGTLAGPLHGGANEEVLNMLEEIGSVENVRPYVEKCLANKQRIMGFGHRVYKVKDPRAIILQDLAEQLFAKMGHDEYYEIAVELEKVVEEYVGQKGIYPNVDFYSGLVYRKLDIPADLFTPLFAIARVAGWLAHWKEQLSVNKIYRPTQIYIGDHNLSYVPMTERVVSVARNEDPNAII.

Active-site residues include histidine 266 and aspartate 320.

It belongs to the citrate synthase family.

It carries out the reaction oxaloacetate + acetyl-CoA + H2O = citrate + CoA + H(+). It functions in the pathway carbohydrate metabolism; tricarboxylic acid cycle; isocitrate from oxaloacetate: step 1/2. This chain is Citrate synthase (gltA), found in Synechocystis sp. (strain ATCC 27184 / PCC 6803 / Kazusa).